A 212-amino-acid polypeptide reads, in one-letter code: ATP-dependent dethiobiotin synthetase BioD (212 aa).

13–18 (GIGKTV) serves as a coordination point for ATP. Thr17 serves as a coordination point for Mg(2+). Residue Lys33 is part of the active site. A substrate-binding site is contributed by Ser37. Glu100 contacts Mg(2+). ATP-binding positions include 100–103 (EGAG) and 184–186 (PRL).

The protein belongs to the dethiobiotin synthetase family. Homodimer. Mg(2+) serves as cofactor.

It is found in the cytoplasm. The catalysed reaction is (7R,8S)-7,8-diammoniononanoate + CO2 + ATP = (4R,5S)-dethiobiotin + ADP + phosphate + 3 H(+). The protein operates within cofactor biosynthesis; biotin biosynthesis; biotin from 7,8-diaminononanoate: step 1/2. In terms of biological role, catalyzes a mechanistically unusual reaction, the ATP-dependent insertion of CO2 between the N7 and N8 nitrogen atoms of 7,8-diaminopelargonic acid (DAPA, also called 7,8-diammoniononanoate) to form a ureido ring. In Rhodopseudomonas palustris (strain TIE-1), this protein is ATP-dependent dethiobiotin synthetase BioD.